We begin with the raw amino-acid sequence, 171 residues long: Squamosa promoter-binding protein 2 (171 aa).

Disordered stretches follow at residues 20-46 (GDEG…VVKV) and 57-76 (KLNL…TASG). A compositionally biased stretch (acidic residues) spans 22-40 (EGSDFEEEEEGEDEEEEEQ). Residues 82–159 (QPCCLVENCG…AGHNERRRKS (78 aa)) form an SBP-type zinc finger. Zn(2+)-binding residues include Cys85, Cys90, Cys107, His110, Cys126, Cys129, His133, and Cys145. A Bipartite nuclear localization signal motif is present at residues 142–158 (KRSCRRRLAGHNERRRK). A compositionally biased stretch (basic residues) spans 149-158 (LAGHNERRRK). Positions 149-171 (LAGHNERRRKSSLESHKEGRSPR) are disordered. Positions 159–171 (SSLESHKEGRSPR) are enriched in basic and acidic residues.

It is found in the nucleus. Functionally, probable transcriptional factor. Binds to the promoter of the SQUAMOSA gene. This is Squamosa promoter-binding protein 2 (SBP2) from Antirrhinum majus (Garden snapdragon).